Here is a 227-residue protein sequence, read N- to C-terminus: ATP synthase F(0) complex subunit a (227 aa).

The next 6 membrane-spanning stretches (helical) occupy residues 12–32, 69–89, 98–118, 139–159, 170–190, and 196–216; these read PYLMGMPLILPSLLLPTLLFP, WALLLTSLILLLLSINLMGLL, QLSMNMALAFPLWLATLLIGL, IPILIMIETTSLLIRPLALGV, LLIQLISTATIALLPTMPSIS, and ILLLLTILEVAVAMIQAYVFV.

It belongs to the ATPase A chain family. Component of the ATP synthase complex composed at least of ATP5F1A/subunit alpha, ATP5F1B/subunit beta, ATP5MC1/subunit c (homooctomer), MT-ATP6/subunit a, MT-ATP8/subunit 8, ATP5ME/subunit e, ATP5MF/subunit f, ATP5MG/subunit g, ATP5MK/subunit k, ATP5MJ/subunit j, ATP5F1C/subunit gamma, ATP5F1D/subunit delta, ATP5F1E/subunit epsilon, ATP5PF/subunit F6, ATP5PB/subunit b, ATP5PD/subunit d, ATP5PO/subunit OSCP. ATP synthase complex consists of a soluble F(1) head domain (subunits alpha(3) and beta(3)) - the catalytic core - and a membrane F(0) domain - the membrane proton channel (subunits c, a, 8, e, f, g, k and j). These two domains are linked by a central stalk (subunits gamma, delta, and epsilon) rotating inside the F1 region and a stationary peripheral stalk (subunits F6, b, d, and OSCP). Interacts with DNAJC30; interaction is direct.

It localises to the mitochondrion inner membrane. The catalysed reaction is H(+)(in) = H(+)(out). Its function is as follows. Subunit a, of the mitochondrial membrane ATP synthase complex (F(1)F(0) ATP synthase or Complex V) that produces ATP from ADP in the presence of a proton gradient across the membrane which is generated by electron transport complexes of the respiratory chain. ATP synthase complex consist of a soluble F(1) head domain - the catalytic core - and a membrane F(1) domain - the membrane proton channel. These two domains are linked by a central stalk rotating inside the F(1) region and a stationary peripheral stalk. During catalysis, ATP synthesis in the catalytic domain of F(1) is coupled via a rotary mechanism of the central stalk subunits to proton translocation. With the subunit c (ATP5MC1), forms the proton-conducting channel in the F(0) domain, that contains two crucial half-channels (inlet and outlet) that facilitate proton movement from the mitochondrial intermembrane space (IMS) into the matrix. Protons are taken up via the inlet half-channel and released through the outlet half-channel, following a Grotthuss mechanism. This is ATP synthase F(0) complex subunit a from Coturnix japonica (Japanese quail).